Here is a 516-residue protein sequence, read N- to C-terminus: GMP synthase [glutamine-hydrolyzing] (516 aa).

In terms of domain architecture, Glutamine amidotransferase type-1 spans 8–198; sequence KILILDFGSQ…VVNICGCDTL (191 aa). C84 functions as the Nucleophile in the catalytic mechanism. Active-site residues include H172 and E174. The GMPS ATP-PPase domain occupies 199–391; it reads WNIENIIEND…LGLPYNMLYR (193 aa). An ATP-binding site is contributed by 226 to 232; sequence SGGVDSS.

In terms of assembly, homodimer.

It carries out the reaction XMP + L-glutamine + ATP + H2O = GMP + L-glutamate + AMP + diphosphate + 2 H(+). Its pathway is purine metabolism; GMP biosynthesis; GMP from XMP (L-Gln route): step 1/1. Catalyzes the synthesis of GMP from XMP. The polypeptide is GMP synthase [glutamine-hydrolyzing] (Francisella tularensis subsp. tularensis (strain WY96-3418)).